The chain runs to 56 residues: MFGWAVTFLIVALVAALLGFTGIAGIATEIAWILFVVGIILFVVFLVLGRRGRPPL.

A run of 2 helical transmembrane segments spans residues 6–26 and 29–49; these read VTFLIVALVAALLGFTGIAGI and EIAWILFVVGIILFVVFLVLG.

The protein belongs to the UPF0391 family.

The protein resides in the cell membrane. The sequence is that of UPF0391 membrane protein Noc_0484 from Nitrosococcus oceani (strain ATCC 19707 / BCRC 17464 / JCM 30415 / NCIMB 11848 / C-107).